A 271-amino-acid chain; its full sequence is Type III pantothenate kinase (271 aa).

Position 6–13 (Asp-6–Val-13) interacts with ATP. Residue Gly-109–Arg-112 coordinates substrate. Asp-111 acts as the Proton acceptor in catalysis. K(+) is bound at residue Asp-131. Residue Ser-134 participates in ATP binding. Position 186 (Thr-186) interacts with substrate.

This sequence belongs to the type III pantothenate kinase family. In terms of assembly, homodimer. Requires NH4(+) as cofactor. The cofactor is K(+).

Its subcellular location is the cytoplasm. The catalysed reaction is (R)-pantothenate + ATP = (R)-4'-phosphopantothenate + ADP + H(+). It participates in cofactor biosynthesis; coenzyme A biosynthesis; CoA from (R)-pantothenate: step 1/5. Its function is as follows. Catalyzes the phosphorylation of pantothenate (Pan), the first step in CoA biosynthesis. In Mycobacterium avium (strain 104), this protein is Type III pantothenate kinase.